The chain runs to 68 residues: Arabinogalactan peptide 1 (68 aa).

A signal peptide spans 1 to 30 (MAGQLKSKIVAVAVAAVVVVASSLVGTASA). Ser40 carries GPI-anchor amidated serine lipidation. A propeptide spans 41–68 (GATATAAAAPAFAAVSVAAAALGGYLFC) (removed in mature form).

The protein belongs to the AG-peptide AGP family. In terms of processing, O-glycosylated on hydroxyprolines; noncontiguous hydroxylproline residues are glycosylated with arabinogalactan. Expressed in roots, stems, flowers and seeds.

The protein localises to the vacuole. The protein resides in the aleurone grain membrane. Proteoglycan that seems to be implicated in diverse developmental roles such as differentiation, cell-cell recognition, embryogenesis and programmed cell death. The polypeptide is Arabinogalactan peptide 1 (AGPEP1) (Oryza sativa subsp. japonica (Rice)).